The following is a 220-amino-acid chain: Large ribosomal subunit protein eL15 (220 aa).

The protein belongs to the eukaryotic ribosomal protein eL15 family.

This is Large ribosomal subunit protein eL15 from Staphylothermus marinus (strain ATCC 43588 / DSM 3639 / JCM 9404 / F1).